The following is a 209-amino-acid chain: Protein ASG7 (209 aa).

Residues 1 to 49 (MTTLASSIEHKTKHLAAPFENDENPWMKKYCCQCKSCKMSVPVQPWLPR) lie on the Lumenal side of the membrane. A helical membrane pass occupies residues 50–70 (FFVFGILCPVFWLVNLLAWWF). Residues 71-184 (LQYWQPHELE…LLRKTFRDWN (114 aa)) are Cytoplasmic-facing. 3 positions are modified to phosphoserine: Ser121, Ser123, and Ser125. Phosphothreonine is present on Thr153. Residues 185 to 205 (LRSLLGLLIDSILIIFVVLLC) form a helical membrane-spanning segment. Over 206-209 (KKSR) the chain is Lumenal.

It localises to the endomembrane system. Functionally, required for receptor inhibition of inappropriately expressed a-factor receptor (STE3) in MAT a cells. Inhibits signaling by relocalizing the G protein beta-gamma (STE4-STE18) subunit to intracellular membranes. May also be a mechanism for the down-regulation of the mating pheromone response after the zygotic fusion event, promoting the transition of the new diploid cell to vegetative growth. In Saccharomyces cerevisiae (strain ATCC 204508 / S288c) (Baker's yeast), this protein is Protein ASG7 (ASG7).